A 583-amino-acid polypeptide reads, in one-letter code: Chromosomal replication initiator protein DnaA (583 aa).

A domain I, interacts with DnaA modulators region spans residues M1–L91. Residues L91–S241 form a domain II region. A disordered region spans residues K151–G239. Over residues E172 to D182 the composition is skewed to basic and acidic residues. The interval L242–C458 is domain III, AAA+ region. Residues G286, G288, K289, and T290 each coordinate ATP. A domain IV, binds dsDNA region spans residues A459–D583.

It belongs to the DnaA family. In terms of assembly, oligomerizes as a right-handed, spiral filament on DNA at oriC.

It localises to the cytoplasm. Its function is as follows. Plays an essential role in the initiation and regulation of chromosomal replication. ATP-DnaA binds to the origin of replication (oriC) to initiate formation of the DNA replication initiation complex once per cell cycle. Binds the DnaA box (a 9 base pair repeat at the origin) and separates the double-stranded (ds)DNA. Forms a right-handed helical filament on oriC DNA; dsDNA binds to the exterior of the filament while single-stranded (ss)DNA is stabiized in the filament's interior. The ATP-DnaA-oriC complex binds and stabilizes one strand of the AT-rich DNA unwinding element (DUE), permitting loading of DNA polymerase. After initiation quickly degrades to an ADP-DnaA complex that is not apt for DNA replication. Binds acidic phospholipids. In Corynebacterium jeikeium (strain K411), this protein is Chromosomal replication initiator protein DnaA.